Reading from the N-terminus, the 245-residue chain is 5'-nucleotidase SurE (245 aa).

Residues aspartate 8, aspartate 9, serine 39, and asparagine 91 each contribute to the a divalent metal cation site.

This sequence belongs to the SurE nucleotidase family. Requires a divalent metal cation as cofactor.

Its subcellular location is the cytoplasm. The enzyme catalyses a ribonucleoside 5'-phosphate + H2O = a ribonucleoside + phosphate. Its function is as follows. Nucleotidase that shows phosphatase activity on nucleoside 5'-monophosphates. This Janthinobacterium sp. (strain Marseille) (Minibacterium massiliensis) protein is 5'-nucleotidase SurE.